Consider the following 86-residue polypeptide: Small ribosomal subunit protein bS20 (86 aa).

The protein belongs to the bacterial ribosomal protein bS20 family.

Functionally, binds directly to 16S ribosomal RNA. The protein is Small ribosomal subunit protein bS20 of Novosphingobium aromaticivorans (strain ATCC 700278 / DSM 12444 / CCUG 56034 / CIP 105152 / NBRC 16084 / F199).